The sequence spans 377 residues: Alanine racemase (377 aa).

The Proton acceptor; specific for D-alanine role is filled by K37. K37 is modified (N6-(pyridoxal phosphate)lysine). R135 contacts substrate. The Proton acceptor; specific for L-alanine role is filled by Y271. M319 contacts substrate.

Belongs to the alanine racemase family. The cofactor is pyridoxal 5'-phosphate.

The enzyme catalyses L-alanine = D-alanine. It functions in the pathway amino-acid biosynthesis; D-alanine biosynthesis; D-alanine from L-alanine: step 1/1. Catalyzes the interconversion of L-alanine and D-alanine. May also act on other amino acids. This chain is Alanine racemase (alr), found in Helicobacter pylori (strain Shi470).